Reading from the N-terminus, the 366-residue chain is tRNA/tmRNA (uracil-C(5))-methyltransferase (366 aa).

Residues Gln-190, Tyr-218, Asn-223, Glu-239, and Asp-299 each contribute to the S-adenosyl-L-methionine site. Cys-324 (nucleophile) is an active-site residue. Glu-358 serves as the catalytic Proton acceptor.

This sequence belongs to the class I-like SAM-binding methyltransferase superfamily. RNA M5U methyltransferase family. TrmA subfamily.

The catalysed reaction is uridine(54) in tRNA + S-adenosyl-L-methionine = 5-methyluridine(54) in tRNA + S-adenosyl-L-homocysteine + H(+). The enzyme catalyses uridine(341) in tmRNA + S-adenosyl-L-methionine = 5-methyluridine(341) in tmRNA + S-adenosyl-L-homocysteine + H(+). Its function is as follows. Dual-specificity methyltransferase that catalyzes the formation of 5-methyluridine at position 54 (m5U54) in all tRNAs, and that of position 341 (m5U341) in tmRNA (transfer-mRNA). The chain is tRNA/tmRNA (uracil-C(5))-methyltransferase from Escherichia coli O17:K52:H18 (strain UMN026 / ExPEC).